The sequence spans 355 residues: NADH dehydrogenase [ubiquinone] 1 alpha subcomplex subunit 10, mitochondrial (355 aa).

The transit peptide at 1-35 (MALRLLKLAATSASARVVAAGAQRVRGIHSSVQCK) directs the protein to the mitochondrion. At Ser-250 the chain carries Phosphoserine; by PINK1. Lys-285 carries the post-translational modification N6-succinyllysine.

It belongs to the complex I NDUFA10 subunit family. As to quaternary structure, complex I is composed of 45 different subunits. This a component of the hydrophobic protein fraction. It depends on FAD as a cofactor. Phosphorylation at Ser-250 by PINK1 is required for the binding and/or reduction of the complex I substrate ubiquinone.

It localises to the mitochondrion matrix. Functionally, accessory subunit of the mitochondrial membrane respiratory chain NADH dehydrogenase (Complex I), that is believed not to be involved in catalysis. Complex I functions in the transfer of electrons from NADH to the respiratory chain. The immediate electron acceptor for the enzyme is believed to be ubiquinone. This chain is NADH dehydrogenase [ubiquinone] 1 alpha subcomplex subunit 10, mitochondrial (NDUFA10), found in Homo sapiens (Human).